Consider the following 24-residue polypeptide: Lactadherin (24 aa).

It is found in the membrane. The protein localises to the secreted. Its subcellular location is the cytoplasmic vesicle. The protein resides in the secretory vesicle. It localises to the acrosome membrane. Functionally, specific ligand for the alpha-v/beta-3 and alpha-v/beta-5 receptors. Also binds to phosphatidylserine-enriched cell surfaces in a receptor-independent manner. Zona pellucida-binding protein which may play a role in gamete interaction. Contributes to phagocytic removal of apoptotic cells in many tissues. Plays an important role in the maintenance of intestinal epithelial homeostasis and the promotion of mucosal healing. Promotes VEGF-dependent neovascularization. This is Lactadherin from Equus asinus (Donkey).